An 890-amino-acid chain; its full sequence is DNA mismatch repair protein MutS (890 aa).

646 to 653 (GPNMAGKS) is a binding site for ATP.

It belongs to the DNA mismatch repair MutS family.

Its function is as follows. This protein is involved in the repair of mismatches in DNA. It is possible that it carries out the mismatch recognition step. This protein has a weak ATPase activity. The sequence is that of DNA mismatch repair protein MutS from Hyphomonas neptunium (strain ATCC 15444).